Consider the following 158-residue polypeptide: Ribonuclease H (158 aa).

Residues 3–144 (ELKLIHIFTD…CDQLARAAAE (142 aa)) enclose the RNase H type-1 domain. Mg(2+) is bound by residues Asp-12, Glu-50, Asp-72, and Asp-136.

The protein belongs to the RNase H family. As to quaternary structure, monomer. Requires Mg(2+) as cofactor.

Its subcellular location is the cytoplasm. The enzyme catalyses Endonucleolytic cleavage to 5'-phosphomonoester.. In terms of biological role, endonuclease that specifically degrades the RNA of RNA-DNA hybrids. The chain is Ribonuclease H from Shewanella sp. (strain MR-4).